The sequence spans 158 residues: Ribosome maturation factor RimP (158 aa).

The protein belongs to the RimP family.

The protein resides in the cytoplasm. Its function is as follows. Required for maturation of 30S ribosomal subunits. The protein is Ribosome maturation factor RimP of Pediococcus pentosaceus (strain ATCC 25745 / CCUG 21536 / LMG 10740 / 183-1w).